Consider the following 574-residue polypeptide: Adenine deaminase (574 aa).

Belongs to the metallo-dependent hydrolases superfamily. Adenine deaminase family. Mn(2+) serves as cofactor.

The catalysed reaction is adenine + H2O + H(+) = hypoxanthine + NH4(+). The polypeptide is Adenine deaminase (Thermosipho africanus (strain TCF52B)).